The chain runs to 296 residues: Centromere protein O (296 aa).

A coiled-coil region spans residues 17–105 (VLAHLERLET…NMKAILQAYR (89 aa)).

Belongs to the CENP-O/MCM21 family. As to quaternary structure, component of the CENPA-CAD complex, composed of CENPI, CENPK, CENPL, CENPO, CENPP, CENPQ, CENPR and CENPS. The CENPA-CAD complex interacts with the CENPA-NAC complex, at least composed of CENPA, CENPC, CENPH, CENPM, CENPN, CENPT and CENPU.

The protein localises to the nucleus. The protein resides in the chromosome. It localises to the centromere. It is found in the kinetochore. Its function is as follows. Component of the CENPA-CAD (nucleosome distal) complex, a complex recruited to centromeres which is involved in assembly of kinetochore proteins, mitotic progression and chromosome segregation. May be involved in incorporation of newly synthesized CENPA into centromeres via its interaction with the CENPA-NAC complex. Modulates the kinetochore-bound levels of NDC80 complex. The protein is Centromere protein O (CENPO) of Bos taurus (Bovine).